Here is a 2136-residue protein sequence, read N- to C-terminus: Protein CELLULOSE SYNTHASE INTERACTIVE 3 (2136 aa).

42 ARM repeats span residues 27-66 (MEMD…LLGI), 71-111 (REAR…VLCK), 113-152 (KDLR…EVSS), 159-201 (HIGM…NLCG), 204-243 (DGYW…RLVL), 246-286 (CDSI…ALSA), 289-337 (DEAK…NVFG), 376-417 (PESS…SLYG), 419-458 (SSLS…GLCH), 461-500 (VGIW…ILTA), 503-542 (DDSK…NLCC), 545-584 (EEIR…KLVH), 586-618 (ADPA…HVLS), 619-663 (KASQ…DLFS), 666-705 (QDIC…ALSR), 711-750 (NNKK…NLLS), 752-791 (PDIA…QLLK), 811-848 (SLVD…FSYP), 849-887 (PWIA…RLCS), 936-980 (QLIT…GFLE), 1013-1041 (SVDA…YTSS), 1042-1083 (AQAE…TLAV), 1109-1149 (RGIN…SLVK), 1163-1204 (EDVR…RIAD), 1207-1247 (DTNK…VLFS), 1249-1288 (HELR…ELFD), 1290-1329 (ENIR…KLSS), 1333-1375 (SNTA…VVFS), 1377-1416 (KNIR…ILLD), 1418-1457 (EQHL…KLGK), 1460-1499 (VPRK…ILTN), 1518-1546 (AVLL…KQQT), 1547-1585 (LEAF…HFLT), 1587-1626 (EDFQ…KISA), 1628-1669 (WPKA…NILQ), 1670-1704 (YDAE…ALML), 1710-1750 (ASST…NNPR), 1790-1833 (SQHE…NFVM), 1836-1875 (RTNR…FLFS), 1921-1960 (PKLR…LLRH), 1969-2008 (VAKS…CLPG), and 2010-2035 (LTVN…QLTI). The region spanning 1989–2106 (KTCPPRFHDK…VTEGEYSGSL (118 aa)) is the C2 domain.

Associates with cellulase synthase (CESA) complexes. Binds to cortical microtubules. Interacts with CESA3 and CESA6. In terms of tissue distribution, expressed in dark-grown hypocotyls, leaves (confined to vasculature and trichomes), stamen, pollen, developing siliques, and roots. Restricted in meristematic tissue of the shoot and root. Present in distinct punctae at the cell cortex, called microtubule-associated cellulose synthase compartments, that move with constant velocities of 10 to 3000 nm/min.

It is found in the cell membrane. It localises to the cytoplasm. Its subcellular location is the cytoskeleton. The protein localises to the endomembrane system. Its function is as follows. Regulator of the microtubular cytoskeleton. Microtubule-associated protein involved in the association of cellulase synthase (CESA) complexes (CSCs) and cortical microtubules. Promotes dynamics of CSCs in the plasma membrane in both microtubules-dependent and microtubules-independent manners. Regulates primary cell wall biosynthesis and cellulose microfibrils organization. In Arabidopsis thaliana (Mouse-ear cress), this protein is Protein CELLULOSE SYNTHASE INTERACTIVE 3.